A 243-amino-acid polypeptide reads, in one-letter code: Complement C1q tumor necrosis factor-related protein 5 (243 aa).

The first 15 residues, 1–15, serve as a signal peptide directing secretion; the sequence is MRPLLALLLLGLASG. The tract at residues 15–124 is disordered; that stretch reads GSPPLDDNKI…VPPPADTPLP (110 aa). Positions 30–95 constitute a Collagen-like domain; sequence GQPGLPGTPG…AGPVGAIGPA (66 aa). The 140-residue stretch at 99–238 folds into the C1q domain; that stretch reads SVPPRSAFSA…GFLVYSDWHS (140 aa).

Homotrimer (via collagen-like domain). May form higher order oligomers by supercoiling of the trimers. May interact with ERFE.

Its subcellular location is the secreted. The protein is Complement C1q tumor necrosis factor-related protein 5 (C1qtnf5) of Rattus norvegicus (Rat).